The chain runs to 547 residues: Chaperonin GroEL (547 aa).

ATP contacts are provided by residues 30-33 (TLGP), K51, 87-91 (DGTTT), G415, and D496. Positions 528–547 (KEEPMPMRGSGMGGMGGMDF) are disordered. Residues 537 to 547 (SGMGGMGGMDF) show a composition bias toward gly residues.

Belongs to the chaperonin (HSP60) family. Forms a cylinder of 14 subunits composed of two heptameric rings stacked back-to-back. Interacts with the co-chaperonin GroES.

The protein resides in the cytoplasm. The enzyme catalyses ATP + H2O + a folded polypeptide = ADP + phosphate + an unfolded polypeptide.. In terms of biological role, together with its co-chaperonin GroES, plays an essential role in assisting protein folding. The GroEL-GroES system forms a nano-cage that allows encapsulation of the non-native substrate proteins and provides a physical environment optimized to promote and accelerate protein folding. The polypeptide is Chaperonin GroEL (Rickettsia canadensis (strain McKiel)).